The primary structure comprises 168 residues: MASVAAAAVSVPSFSGLKAETKAAPARLSSTSVVRMAPVVRASASSDALKTVGKALLAASSSLLLVASANAATVKMGGDDGALGFYPKDISVAAGESVTFVNNKGFPHNVVFDEDAVPAGVKTEDINHEDYLNGPNESFSITFKTPGTYEFYCEPHQGAGMKGVVTVS.

A chloroplast-targeting transit peptide spans Met1–Asn70. The region spanning Ala71–Ser168 is the Plastocyanin-like domain. Cu cation-binding residues include His108, Cys153, His156, and Met161.

This sequence belongs to the plastocyanin family. Cu(2+) is required as a cofactor.

It is found in the plastid. The protein localises to the chloroplast thylakoid membrane. Its function is as follows. Participates in electron transfer between P700 and the cytochrome b6-f complex in photosystem I. This Physcomitrium patens (Spreading-leaved earth moss) protein is Plastocyanin, chloroplastic (PETE).